The following is a 578-amino-acid chain: MGEPSPSRRRSITSGIPCPSPTKQVLPPPPPEELHNILRKRPRSSAIPTTSQTHVRAPRKETDVVDRIWHDIDEEQREKLARRKEEAAKRKEQQPAQHIRDYLPLTATNLRNFRNEDSTISDFIHRQGMVDKLLGYKMLLGKMENCGTLGYEKMSEDEVQQLSREWLKNFFPSEQAHVGPRTPPSPAVDSDGGSYPKRPRRGPKTPPGSPGPSMDQAAVNRRELIEQLARNFGISSYKVEETLGTGLDKALEDCSKKLKNELMETFKDQLLSQIDRKTKIRDDLSDQMELVSDCSLSPDLIKKEEPDVVYHMAVPPPPIPPPIQPPPYSYYPVAPAAAPQVYHYAPPPPPPPPHPQQGLYQQNMMAYPPPMQHFNAPPPPMAPYQHQAPPSIVLPPVNVPPPPIGVRIDTPIPTAVLPIPTMVPPPPLPPPQAPFSGDCWRAQPAAPVPASVPVSSAPPPSVVVNVQSTLFSALGLHHKPPPPPPPPPPPTTSSTTTSHIPPPPPPPLPFSSAPPPPPPLPMVAAGPSPPSFVPPPPPPNPNQNPSIVLSPSAVTGGGGYRHRVNQFPPQQQQSFSNF.

Disordered regions lie at residues 1 to 62 (MGEP…RKET), 173 to 216 (SEQA…SMDQ), 426 to 457 (PPLP…VSSA), and 474 to 578 (LGLH…FSNF). The segment covering 444–455 (PAAPVPASVPVS) has biased composition (low complexity). Pro residues-rich tracts occupy residues 481–491 (PPPPPPPPPPT) and 500–542 (IPPP…PNPN). Positions 565–578 (NQFPPQQQQSFSNF) are enriched in low complexity.

As to quaternary structure, may interact (via C-terminus) with ssup-72; the interaction may prevent ssup-72 binding to RNA polymerase II subunit ama-1. In terms of tissue distribution, expressed in germline, oocytes, epidermis, pharyngeal bulb and neurons.

It localises to the nucleus. It is found in the nucleus speckle. Functionally, acts as a negative regulator of nuclear pre-mRNA 3'-end processing (mRNA polyadenylation). Plays a role in tissue-specific expression of protein isoforms by regulating differential processing of pre-mRNA 3'-end (alternative polyadenylation). In neurons, regulates alternative polyadenylation of specific mRNAs including unc-44 and dlk-1 by interacting with phosphatase ssup-72 and thus preventing ssup-72 dephosphorylation of RNA polymerase II subunit ama-1. Specifically, alters the usage of internal polyadenylation sites (PAS) to promote the production of neuron-specific unc-44 isoform and dlk-1 isoform c, both required for normal synapse and axon development. Conversely, in the epidermis, by inhibiting ssup-72 function, promotes the usage of an internal PAS preventing the production of one of unc-44 isoforms. In neurons, also negatively regulates protein levels of pre-RNA processing protein psf-2. In Caenorhabditis elegans, this protein is Synaptic defective enhancer 1.